Reading from the N-terminus, the 282-residue chain is 4-diphosphocytidyl-2-C-methyl-D-erythritol kinase (282 aa).

The active site involves K15. P98–S108 contributes to the ATP binding site. The active site involves D140.

Belongs to the GHMP kinase family. IspE subfamily.

It carries out the reaction 4-CDP-2-C-methyl-D-erythritol + ATP = 4-CDP-2-C-methyl-D-erythritol 2-phosphate + ADP + H(+). Its pathway is isoprenoid biosynthesis; isopentenyl diphosphate biosynthesis via DXP pathway; isopentenyl diphosphate from 1-deoxy-D-xylulose 5-phosphate: step 3/6. In terms of biological role, catalyzes the phosphorylation of the position 2 hydroxy group of 4-diphosphocytidyl-2C-methyl-D-erythritol. The polypeptide is 4-diphosphocytidyl-2-C-methyl-D-erythritol kinase (Azoarcus sp. (strain BH72)).